A 526-amino-acid chain; its full sequence is Probable Xaa-Pro aminopeptidase MGG_05684 (526 aa).

Mn(2+)-binding residues include D285, D296, E447, and E488.

Belongs to the peptidase M24B family. The cofactor is Mn(2+).

The catalysed reaction is Release of any N-terminal amino acid, including proline, that is linked to proline, even from a dipeptide or tripeptide.. Catalyzes the removal of a penultimate prolyl residue from the N-termini of peptides. The protein is Probable Xaa-Pro aminopeptidase MGG_05684 of Pyricularia oryzae (strain 70-15 / ATCC MYA-4617 / FGSC 8958) (Rice blast fungus).